The following is a 314-amino-acid chain: Olfactory receptor 1E16 (314 aa).

Over 1–29 the chain is Extracellular; it reads MTERNKTVISQFLLLGLPIPPEHQQLFYA. Residue Asn5 is glycosylated (N-linked (GlcNAc...) asparagine). Residues 30 to 50 traverse the membrane as a helical segment; sequence LFLVMYLTTVLGNLIIIILII. Residues 51–57 lie on the Cytoplasmic side of the membrane; that stretch reads LDSHLHT. The helical transmembrane segment at 58–78 threads the bilayer; that stretch reads PMYLFLSNLSFSDLCFSSVTM. Topologically, residues 79-97 are extracellular; sequence PKLLQNMQSQVPSIPYAGC. A disulfide bond links Cys97 and Cys179. The chain crosses the membrane as a helical span at residues 98–118; that stretch reads LAQIYFFLFFGDLGNFLLVAM. Over 119–143 the chain is Cytoplasmic; that stretch reads AYDRYVAICYPLHYTTIMSPRLCVS. The chain crosses the membrane as a helical span at residues 144–164; sequence LVVLSWVLTTFHAMLHTLLMA. The Extracellular portion of the chain corresponds to 165-196; the sequence is RLSFCEDNVIPHYFCDMSALLKLACSDTRVNE. A helical transmembrane segment spans residues 197 to 217; the sequence is VVIFIVASIFLVLPFALITMS. Over 218–239 the chain is Cytoplasmic; it reads YVRIVSSILKVPSSQGIYKAFS. The helical transmembrane segment at 240 to 260 threads the bilayer; that stretch reads TCGSHLSVVSLFYGTVIGLYL. Over 261–271 the chain is Extracellular; that stretch reads SPSSNNSTVKD. N-linked (GlcNAc...) asparagine glycosylation is found at Asn265 and Asn266. Residues 272-292 form a helical membrane-spanning segment; sequence TVMSLMYTVVTPMLNPFIYSL. Over 293 to 314 the chain is Cytoplasmic; that stretch reads RNRDIKGALERVFCKRKIQLNL.

The protein belongs to the G-protein coupled receptor 1 family. Olfactory epithelium.

It localises to the cell membrane. In terms of biological role, odorant receptor. Activated by a lily-derived aldehyde as well as other odorants. May signal through an inositol 1,4,5-trisphosphate (IP3) second messenger system. The chain is Olfactory receptor 1E16 from Mus musculus (Mouse).